The chain runs to 132 residues: Small ribosomal subunit protein uS11 (132 aa).

It belongs to the universal ribosomal protein uS11 family. Part of the 30S ribosomal subunit. Interacts with proteins S7 and S18. Binds to IF-3.

In terms of biological role, located on the platform of the 30S subunit, it bridges several disparate RNA helices of the 16S rRNA. Forms part of the Shine-Dalgarno cleft in the 70S ribosome. The polypeptide is Small ribosomal subunit protein uS11 (Cyanothece sp. (strain PCC 7425 / ATCC 29141)).